The following is a 532-amino-acid chain: Chaperonin GroEL 2 (532 aa).

ATP-binding positions include 30 to 33, Lys51, 87 to 91, Gly415, 479 to 481, and Asp495; these read TLGP, DGTTT, and NAA.

It belongs to the chaperonin (HSP60) family. Forms a cylinder of 14 subunits composed of two heptameric rings stacked back-to-back. Interacts with the co-chaperonin GroES.

The protein resides in the cytoplasm. The catalysed reaction is ATP + H2O + a folded polypeptide = ADP + phosphate + an unfolded polypeptide.. In terms of biological role, together with its co-chaperonin GroES, plays an essential role in assisting protein folding. The GroEL-GroES system forms a nano-cage that allows encapsulation of the non-native substrate proteins and provides a physical environment optimized to promote and accelerate protein folding. The protein is Chaperonin GroEL 2 of Vibrio parahaemolyticus serotype O3:K6 (strain RIMD 2210633).